We begin with the raw amino-acid sequence, 428 residues long: Putative heme-binding peroxidase (428 aa).

Residues 1–33 (MTAIQKPVVAKREAPKAEVNPTVSRSTQTETIK) are disordered. Positions 21-32 (PTVSRSTQTETI) are enriched in polar residues. The Proton acceptor role is filled by His188. Heme b is bound at residue His312. Residue Trp328 is the Tryptophan radical intermediate of the active site.

This sequence belongs to the peroxidase family. Cytochrome c peroxidase subfamily. Heme b is required as a cofactor.

Destroys radicals which are normally produced within the cells and which are toxic to biological systems. This chain is Putative heme-binding peroxidase, found in Debaryomyces hansenii (strain ATCC 36239 / CBS 767 / BCRC 21394 / JCM 1990 / NBRC 0083 / IGC 2968) (Yeast).